Here is a 226-residue protein sequence, read N- to C-terminus: PKHD-type hydroxylase PiuC (226 aa).

In terms of domain architecture, Fe2OG dioxygenase spans Lys78–Ser178. Fe cation is bound by residues His96, Asp98, and His159. A 2-oxoglutarate-binding site is contributed by Arg169.

The cofactor is Fe(2+). Requires L-ascorbate as cofactor.

This is PKHD-type hydroxylase PiuC (piuC) from Pseudomonas aeruginosa (strain ATCC 15692 / DSM 22644 / CIP 104116 / JCM 14847 / LMG 12228 / 1C / PRS 101 / PAO1).